A 147-amino-acid chain; its full sequence is Deoxyuridine 5'-triphosphate nucleotidohydrolase (147 aa).

Residues 67-69 (RSG), asparagine 80, and 84-86 (TID) contribute to the substrate site.

It belongs to the dUTPase family. Requires Mg(2+) as cofactor.

The enzyme catalyses dUTP + H2O = dUMP + diphosphate + H(+). It participates in pyrimidine metabolism; dUMP biosynthesis; dUMP from dCTP (dUTP route): step 2/2. Functionally, this enzyme is involved in nucleotide metabolism: it produces dUMP, the immediate precursor of thymidine nucleotides and it decreases the intracellular concentration of dUTP so that uracil cannot be incorporated into DNA. This Syntrophotalea carbinolica (strain DSM 2380 / NBRC 103641 / GraBd1) (Pelobacter carbinolicus) protein is Deoxyuridine 5'-triphosphate nucleotidohydrolase.